Reading from the N-terminus, the 154-residue chain is Myoglobin (154 aa).

Residues 2–148 form the Globin domain; it reads GLSDQEWQHV…FRNDMASKYK (147 aa). His-65 serves as a coordination point for nitrite. His-65 is a binding site for O2. His-94 serves as a coordination point for heme b.

In terms of assembly, monomeric.

The protein resides in the cytoplasm. It localises to the sarcoplasm. It catalyses the reaction Fe(III)-heme b-[protein] + nitric oxide + H2O = Fe(II)-heme b-[protein] + nitrite + 2 H(+). The enzyme catalyses H2O2 + AH2 = A + 2 H2O. Functionally, monomeric heme protein which primary function is to store oxygen and facilitate its diffusion within muscle tissues. Reversibly binds oxygen through a pentacoordinated heme iron and enables its timely and efficient release as needed during periods of heightened demand. Depending on the oxidative conditions of tissues and cells, and in addition to its ability to bind oxygen, it also has a nitrite reductase activity whereby it regulates the production of bioactive nitric oxide. Under stress conditions, like hypoxia and anoxia, it also protects cells against reactive oxygen species thanks to its pseudoperoxidase activity. This Dromaius novaehollandiae (Emu) protein is Myoglobin.